The sequence spans 320 residues: Malate dehydrogenase (320 aa).

NAD(+)-binding positions include 10 to 15 and aspartate 34; that span reads GSGMIG. The substrate site is built by arginine 83 and arginine 89. NAD(+) contacts are provided by residues asparagine 96 and 119–121; that span reads ITN. Residues asparagine 121 and arginine 152 each contribute to the substrate site. The active-site Proton acceptor is histidine 176.

It belongs to the LDH/MDH superfamily. MDH type 3 family.

It catalyses the reaction (S)-malate + NAD(+) = oxaloacetate + NADH + H(+). Catalyzes the reversible oxidation of malate to oxaloacetate. In Bartonella tribocorum (strain CIP 105476 / IBS 506), this protein is Malate dehydrogenase.